Consider the following 380-residue polypeptide: Chaperone protein DnaJ (380 aa).

Positions 5-70 (DYYEALGVAR…RKRTAYDQFG (66 aa)) constitute a J domain. The CR-type zinc finger occupies 137 to 215 (GTTAKIRIPT…CRGEGRVREH (79 aa)). Zn(2+)-binding residues include Cys-150, Cys-153, Cys-167, Cys-170, Cys-189, Cys-192, Cys-203, and Cys-206. 4 CXXCXGXG motif repeats span residues 150–157 (CKACEGSG), 167–174 (CPTCGGHG), 189–196 (CPRCHGSG), and 203–210 (CSTCRGEG). A disordered region spans residues 222-247 (IPPGVDTGDRIRLTGEGEAGESGGPP).

It belongs to the DnaJ family. As to quaternary structure, homodimer. It depends on Zn(2+) as a cofactor.

Its subcellular location is the cytoplasm. Functionally, participates actively in the response to hyperosmotic and heat shock by preventing the aggregation of stress-denatured proteins and by disaggregating proteins, also in an autonomous, DnaK-independent fashion. Unfolded proteins bind initially to DnaJ; upon interaction with the DnaJ-bound protein, DnaK hydrolyzes its bound ATP, resulting in the formation of a stable complex. GrpE releases ADP from DnaK; ATP binding to DnaK triggers the release of the substrate protein, thus completing the reaction cycle. Several rounds of ATP-dependent interactions between DnaJ, DnaK and GrpE are required for fully efficient folding. Also involved, together with DnaK and GrpE, in the DNA replication of plasmids through activation of initiation proteins. The sequence is that of Chaperone protein DnaJ from Nitrosococcus oceani (strain ATCC 19707 / BCRC 17464 / JCM 30415 / NCIMB 11848 / C-107).